The following is a 349-amino-acid chain: GMP reductase (349 aa).

108–131 serves as a coordination point for NADP(+); sequence IDFLKIKKIFLLSSELKYICIDVA. The K(+) site is built by glycine 181 and glycine 183. Cysteine 186 (thioimidate intermediate) is an active-site residue. 216 to 239 is a binding site for NADP(+); the sequence is IISDGGCTVSGDIAKAFGGGADFV.

The protein belongs to the IMPDH/GMPR family. GuaC type 1 subfamily. In terms of assembly, homotetramer.

The catalysed reaction is IMP + NH4(+) + NADP(+) = GMP + NADPH + 2 H(+). In terms of biological role, catalyzes the irreversible NADPH-dependent deamination of GMP to IMP. It functions in the conversion of nucleobase, nucleoside and nucleotide derivatives of G to A nucleotides, and in maintaining the intracellular balance of A and G nucleotides. This chain is GMP reductase, found in Buchnera aphidicola subsp. Acyrthosiphon pisum (strain 5A).